Consider the following 596-residue polypeptide: Arginine--tRNA ligase (596 aa).

The 'HIGH' region motif lies at 128–138 (ANPTSSLHVGH).

This sequence belongs to the class-I aminoacyl-tRNA synthetase family. Monomer.

It is found in the cytoplasm. The enzyme catalyses tRNA(Arg) + L-arginine + ATP = L-arginyl-tRNA(Arg) + AMP + diphosphate. In Acinetobacter baumannii (strain SDF), this protein is Arginine--tRNA ligase.